A 333-amino-acid chain; its full sequence is Transcription initiation factor IIB (333 aa).

The TFIIB-type zinc-finger motif lies at 33 to 64; the sequence is EVYRCPICGNDRFVYNYERGEIVCIVCGAVVQ. Zn(2+) contacts are provided by Cys-37, Cys-40, Cys-56, and Cys-59. A run of 2 repeats spans residues 149–232 and 243–324.

Belongs to the TFIIB family.

Stabilizes TBP binding to an archaeal box-A promoter. Also responsible for recruiting RNA polymerase II to the pre-initiation complex (DNA-TBP-TFIIB). This is Transcription initiation factor IIB from Pyrobaculum islandicum (strain DSM 4184 / JCM 9189 / GEO3).